The sequence spans 390 residues: 3-ketoacyl-CoA thiolase (390 aa).

Cysteine 95 functions as the Acyl-thioester intermediate in the catalytic mechanism. Residues histidine 346 and cysteine 376 each act as proton acceptor in the active site.

The protein belongs to the thiolase-like superfamily. Thiolase family. Heterotetramer of two alpha chains (FadB) and two beta chains (FadA).

The protein localises to the cytoplasm. It catalyses the reaction an acyl-CoA + acetyl-CoA = a 3-oxoacyl-CoA + CoA. It participates in lipid metabolism; fatty acid beta-oxidation. Catalyzes the final step of fatty acid oxidation in which acetyl-CoA is released and the CoA ester of a fatty acid two carbons shorter is formed. The polypeptide is 3-ketoacyl-CoA thiolase (Acinetobacter baumannii (strain ATCC 17978 / DSM 105126 / CIP 53.77 / LMG 1025 / NCDC KC755 / 5377)).